Here is a 456-residue protein sequence, read N- to C-terminus: Exodeoxyribonuclease 7 large subunit (456 aa).

Belongs to the XseA family. As to quaternary structure, heterooligomer composed of large and small subunits.

It localises to the cytoplasm. It carries out the reaction Exonucleolytic cleavage in either 5'- to 3'- or 3'- to 5'-direction to yield nucleoside 5'-phosphates.. In terms of biological role, bidirectionally degrades single-stranded DNA into large acid-insoluble oligonucleotides, which are then degraded further into small acid-soluble oligonucleotides. The chain is Exodeoxyribonuclease 7 large subunit from Escherichia coli O157:H7.